A 935-amino-acid chain; its full sequence is Isoleucine--tRNA ligase (935 aa).

Residues proline 58–histidine 68 carry the 'HIGH' region motif. L-isoleucyl-5'-AMP is bound at residue glutamate 558. The short motif at lysine 599–serine 603 is the 'KMSKS' region element. Residue lysine 602 coordinates ATP. Zn(2+)-binding residues include cysteine 897, cysteine 900, cysteine 917, and cysteine 920.

This sequence belongs to the class-I aminoacyl-tRNA synthetase family. IleS type 1 subfamily. In terms of assembly, monomer. Zn(2+) is required as a cofactor.

The protein resides in the cytoplasm. The enzyme catalyses tRNA(Ile) + L-isoleucine + ATP = L-isoleucyl-tRNA(Ile) + AMP + diphosphate. Catalyzes the attachment of isoleucine to tRNA(Ile). As IleRS can inadvertently accommodate and process structurally similar amino acids such as valine, to avoid such errors it has two additional distinct tRNA(Ile)-dependent editing activities. One activity is designated as 'pretransfer' editing and involves the hydrolysis of activated Val-AMP. The other activity is designated 'posttransfer' editing and involves deacylation of mischarged Val-tRNA(Ile). This chain is Isoleucine--tRNA ligase, found in Francisella tularensis subsp. mediasiatica (strain FSC147).